The chain runs to 24 residues: GIFSNMYXRTPAGYFRGPXGYXXN.

It belongs to the DEFL family. Group IV subfamily. Distributed in the epidermal cell layer of leaves and in the subepidermal layer region of stems. Not in roots.

The protein resides in the secreted. It is found in the cell wall. Its function is as follows. Antimicrobial peptide. Active against Fusarium spp., Gram-positive and Gram-negative bacterial pathogens. This Spinacia oleracea (Spinach) protein is Defensin D6.